The primary structure comprises 397 residues: Flavohemoprotein A (397 aa).

The 136-residue stretch at 2 to 137 (SLSQQSISII…IAQAFIDAEA (136 aa)) folds into the Globin domain. His-84 contacts heme b. Catalysis depends on charge relay system residues Tyr-94 and Glu-136. A reductase region spans residues 150–397 (WRDTREFIVD…YEIFGPLTNV (248 aa)). One can recognise an FAD-binding FR-type domain in the interval 151 to 266 (RDTREFIVDR…SPPAGDYVVD (116 aa)). Residues Tyr-189 and 208 to 211 (RHYS) contribute to the FAD site. Residue 279–284 (GVGITP) coordinates NADP(+). 390-393 (IFGP) serves as a coordination point for FAD.

It belongs to the globin family. Two-domain flavohemoproteins subfamily. This sequence in the C-terminal section; belongs to the flavoprotein pyridine nucleotide cytochrome reductase family. It depends on FAD as a cofactor. The cofactor is heme b.

Its subcellular location is the cytoplasm. It carries out the reaction 2 nitric oxide + NADPH + 2 O2 = 2 nitrate + NADP(+) + H(+). It catalyses the reaction 2 nitric oxide + NADH + 2 O2 = 2 nitrate + NAD(+) + H(+). In terms of biological role, is involved in NO detoxification in an aerobic process, termed nitric oxide dioxygenase (NOD) reaction that utilizes O(2) and NAD(P)H to convert NO to nitrate, which protects the cell from various noxious nitrogen compounds. Therefore, plays a central role in the inducible response to nitrosative stress. Its function is as follows. In the presence of oxygen and NADH, it has NADH oxidase activity, which leads to the generation of superoxide and H(2)O(2). Under anaerobic conditions, it also exhibits nitric oxide reductase and FAD reductase activities. However, all these reactions are much lower than NOD activity. This Dictyostelium discoideum (Social amoeba) protein is Flavohemoprotein A (fhbA).